The chain runs to 408 residues: LL-diaminopimelate aminotransferase (408 aa).

Positions 15 and 42 each coordinate substrate. Residues Tyr72, 108-109 (SK), Tyr132, Asn187, Tyr218, and 246-248 (SFS) each bind pyridoxal 5'-phosphate. Positions 109, 132, and 187 each coordinate substrate. Position 249 is an N6-(pyridoxal phosphate)lysine (Lys249). The pyridoxal 5'-phosphate site is built by Arg257 and Asn292. Asn292 and Arg388 together coordinate substrate.

Belongs to the class-I pyridoxal-phosphate-dependent aminotransferase family. LL-diaminopimelate aminotransferase subfamily. As to quaternary structure, homodimer. The cofactor is pyridoxal 5'-phosphate.

It carries out the reaction (2S,6S)-2,6-diaminopimelate + 2-oxoglutarate = (S)-2,3,4,5-tetrahydrodipicolinate + L-glutamate + H2O + H(+). Its pathway is amino-acid biosynthesis; L-lysine biosynthesis via DAP pathway; LL-2,6-diaminopimelate from (S)-tetrahydrodipicolinate (aminotransferase route): step 1/1. Involved in the synthesis of meso-diaminopimelate (m-DAP or DL-DAP), required for both lysine and peptidoglycan biosynthesis. Catalyzes the direct conversion of tetrahydrodipicolinate to LL-diaminopimelate. The chain is LL-diaminopimelate aminotransferase from Prochlorococcus marinus (strain MIT 9301).